Here is a 652-residue protein sequence, read N- to C-terminus: Starch synthase 1, chloroplastic/amyloplastic (652 aa).

A chloroplast-targeting transit peptide spans 1-49 (MASLQISGSVKFEPFVGFNRIRHFRPIASLGFPRFRRRFSIGRSLLLRR). Lysine 156 is a binding site for ADP-alpha-D-glucose.

The protein belongs to the glycosyltransferase 1 family. Bacterial/plant glycogen synthase subfamily. Expressed in roots, leaves, stems, buds and flowers.

The protein localises to the plastid. Its subcellular location is the chloroplast. It localises to the amyloplast. It carries out the reaction [(1-&gt;4)-alpha-D-glucosyl](n) + ADP-alpha-D-glucose = [(1-&gt;4)-alpha-D-glucosyl](n+1) + ADP + H(+). It participates in glycan biosynthesis; starch biosynthesis. Functionally, involved in the synthesis of short glycan chains within amylopectin in leaves. Is required to generate chains up to about a degree of polymerization of 10 (DP10). In Arabidopsis thaliana (Mouse-ear cress), this protein is Starch synthase 1, chloroplastic/amyloplastic (SS1).